The chain runs to 382 residues: MELVAGSYEQVLFGFTVQRGPAKSGHQETWTPVADFTHHSHTASLSVLASNSRYVVSGSKDETIHIYDMKRKVEHGALVHHAGTVTCLKFHGNQHLISGAEDGHICIWDVKRWKCLKTFKAHRGHVTFLSIHPSGKLALSVGTDKTLRTWNLIEGRSAFIKNIKENAHIVEWSPSGGKYIVVVQNKVDVYRLGTASVSGTITNGKRISSVTFLSDSVLAVAGDEEVVRIFDCDSLECLCEFRAHENRVKDMVSFEVPDHHVLVTASNDGFIKMWTLPQDKKVPPSLLCEAKTGARLTCLTVWLDRAANGMASLPPAAEPCPDQPKTIEKESGDTVQEETSEPNSEKSDVSGDSKQPTKGNSPVTAKKRKMATMSEKKRKKKM.

5 WD repeats span residues 37–77 (THHS…EHGA), 80–120 (HHAG…KTFK), 122–160 (HRGHVTFLSIHPSGKLALSVGTDKTLRTWNLIEGRSAFI), 202–240 (TNGKRISSVTFLSDSVLAVAGDEEVVRIFDCDSLECLCE), and 243–284 (AHEN…KVPP). Positions 313–382 (LPPAAEPCPD…MSEKKRKKKM (70 aa)) are disordered. The segment covering 352 to 363 (DSKQPTKGNSPV) has biased composition (polar residues). Residues 365 to 382 (AKKRKMATMSEKKRKKKM) show a composition bias toward basic residues.

In terms of assembly, interacts with PAK1.

The protein localises to the nucleus. The protein resides in the nucleolus. Its function is as follows. Negatively regulates the PAK1 kinase. PAK1 is a member of the PAK kinase family, which has been shown to play a positive role in the regulation of signaling pathways involving MAPK8 and RELA. PAK1 exists as an inactive homodimer, which is activated by binding of small GTPases such as CDC42 to an N-terminal regulatory domain. PAK1IP1 also binds to the N-terminus of PAK1, and inhibits the specific activation of PAK1 by CDC42. May be involved in ribosomal large subunit assembly. In Mus musculus (Mouse), this protein is p21-activated protein kinase-interacting protein 1 (Pak1ip1).